The following is a 203-amino-acid chain: uncharacterized protein (203 aa).

The disordered stretch occupies residues 117–138; it reads SSDPKLKQPSNCLNDQTNNDSA. Polar residues predominate over residues 124-138; that stretch reads QPSNCLNDQTNNDSA.

The protein localises to the cytoplasm. Its subcellular location is the nucleus. This is an uncharacterized protein from Schizosaccharomyces pombe (strain 972 / ATCC 24843) (Fission yeast).